The following is a 232-amino-acid chain: BTB/POZ domain-containing protein KCTD11 (232 aa).

Residues 1–49 form the BTB domain; it reads MLGAMFRADTLMPANLNPQGDGHYFIDRDGKAFRHILNFLRLGRLDLPR.

Homopentamer. Interacts with KCTD6 and KCTD21; KCTD11 and KCTD6 or KCTD21 may associate in pentameric assemblies. Component of the BCR(KCTD11) E3 ubiquitin ligase complex, at least composed of CUL3 and KCTD11 and RBX1. Interacts (via BTB domain) with CUL3; initially a 4:4 stoichiometry has been reported, however, electron microscopy revealed pentameric states of the BTB domain. In terms of tissue distribution, weakly expressed in lung. In the cerebellum, higher expression in non proliferating external granule cells layer than in highly proliferating ones.

It functions in the pathway protein modification; protein ubiquitination. Plays a role as a marker and a regulator of neuronal differentiation; Up-regulated by a variety of neurogenic signals, such as retinoic acid, epidermal growth factor/EGF and NGFB/nerve growth factor. Induces apoptosis, growth arrest and the expression of cyclin-dependent kinase inhibitor CDKN1B. Plays a role as a tumor repressor and inhibits cell growth and tumorigenicity of medulloblastoma (MDB). Acts as a probable substrate-specific adapter for a BCR (BTB-CUL3-RBX1) E3 ubiquitin-protein ligase complex towards HDAC1. Functions as antagonist of the Hedgehog pathway on cell proliferation and differentiation by affecting the nuclear transfer of transcription factor GLI1, thus maintaining cerebellar granule cells in undifferentiated state, this effect probably occurs via HDAC1 down-regulation, keeping GLI1 acetylated and inactive. When knock-down, Hedgehog antagonism is impaired and proliferation of granule cells is sustained. Activates the caspase cascade. The chain is BTB/POZ domain-containing protein KCTD11 (Kctd11) from Mus musculus (Mouse).